The chain runs to 1413 residues: DNA-directed RNA polymerase subunit beta' (1413 aa).

Positions 70, 72, 85, and 88 each coordinate Zn(2+). Aspartate 460, aspartate 462, and aspartate 464 together coordinate Mg(2+). Cysteine 819, cysteine 893, cysteine 900, and cysteine 903 together coordinate Zn(2+). The disordered stretch occupies residues 1392-1413; the sequence is EEAFDFGTPSAPAEEPQHPAAE.

It belongs to the RNA polymerase beta' chain family. The RNAP catalytic core consists of 2 alpha, 1 beta, 1 beta' and 1 omega subunit. When a sigma factor is associated with the core the holoenzyme is formed, which can initiate transcription. It depends on Mg(2+) as a cofactor. Zn(2+) is required as a cofactor.

The enzyme catalyses RNA(n) + a ribonucleoside 5'-triphosphate = RNA(n+1) + diphosphate. In terms of biological role, DNA-dependent RNA polymerase catalyzes the transcription of DNA into RNA using the four ribonucleoside triphosphates as substrates. The protein is DNA-directed RNA polymerase subunit beta' of Burkholderia orbicola (strain MC0-3).